Consider the following 203-residue polypeptide: NADH-quinone oxidoreductase subunit C (203 aa).

The protein belongs to the complex I 30 kDa subunit family. In terms of assembly, NDH-1 is composed of 14 different subunits. Subunits NuoB, C, D, E, F, and G constitute the peripheral sector of the complex.

It is found in the cell inner membrane. The catalysed reaction is a quinone + NADH + 5 H(+)(in) = a quinol + NAD(+) + 4 H(+)(out). NDH-1 shuttles electrons from NADH, via FMN and iron-sulfur (Fe-S) centers, to quinones in the respiratory chain. The immediate electron acceptor for the enzyme in this species is believed to be ubiquinone. Couples the redox reaction to proton translocation (for every two electrons transferred, four hydrogen ions are translocated across the cytoplasmic membrane), and thus conserves the redox energy in a proton gradient. The sequence is that of NADH-quinone oxidoreductase subunit C from Polaromonas sp. (strain JS666 / ATCC BAA-500).